We begin with the raw amino-acid sequence, 260 residues long: DNA repair protein RecO (260 aa).

The protein belongs to the RecO family.

Functionally, involved in DNA repair and RecF pathway recombination. This is DNA repair protein RecO from Ligilactobacillus salivarius (strain UCC118) (Lactobacillus salivarius).